The chain runs to 313 residues: tRNA dimethylallyltransferase (313 aa).

11–18 (GPTACGKT) serves as a coordination point for ATP. A substrate-binding site is contributed by 13–18 (TACGKT). 3 interaction with substrate tRNA regions span residues 36-39 (DSAL), 160-164 (QRIER), and 243-248 (RCVGYR).

It belongs to the IPP transferase family. Monomer. The cofactor is Mg(2+).

The catalysed reaction is adenosine(37) in tRNA + dimethylallyl diphosphate = N(6)-dimethylallyladenosine(37) in tRNA + diphosphate. Its function is as follows. Catalyzes the transfer of a dimethylallyl group onto the adenine at position 37 in tRNAs that read codons beginning with uridine, leading to the formation of N6-(dimethylallyl)adenosine (i(6)A). The chain is tRNA dimethylallyltransferase from Neisseria meningitidis serogroup C (strain 053442).